A 306-amino-acid chain; its full sequence is Large ribosomal subunit protein mL45 (306 aa).

Positions 287–306 (LKPEEEYEEAQGEAQKPQLA) are disordered.

Belongs to the mitochondrion-specific ribosomal protein mL45 family. Component of the mitochondrial large ribosomal subunit (mt-LSU). Mature mammalian 55S mitochondrial ribosomes consist of a small (28S) and a large (39S) subunit. The 28S small subunit contains a 12S ribosomal RNA (12S mt-rRNA) and 30 different proteins. The 39S large subunit contains a 16S rRNA (16S mt-rRNA), a copy of mitochondrial valine transfer RNA (mt-tRNA(Val)), which plays an integral structural role, and 52 different proteins.

It localises to the mitochondrion. In terms of biological role, component of the mitochondrial large ribosomal subunit (mt-LSU). Within the mitochondrial ribosomes, required to direct the nascent polypeptide toward the tunnel exit and position the exit at a distance from the membrane surface. The chain is Large ribosomal subunit protein mL45 from Homo sapiens (Human).